Consider the following 180-residue polypeptide: Adenine phosphoribosyltransferase (180 aa).

Belongs to the purine/pyrimidine phosphoribosyltransferase family. As to quaternary structure, homodimer.

The protein localises to the cytoplasm. The catalysed reaction is AMP + diphosphate = 5-phospho-alpha-D-ribose 1-diphosphate + adenine. It functions in the pathway purine metabolism; AMP biosynthesis via salvage pathway; AMP from adenine: step 1/1. Functionally, catalyzes a salvage reaction resulting in the formation of AMP, that is energically less costly than de novo synthesis. The chain is Adenine phosphoribosyltransferase from Mycoplasma genitalium (strain ATCC 33530 / DSM 19775 / NCTC 10195 / G37) (Mycoplasmoides genitalium).